The following is a 216-amino-acid chain: Ras-related protein Rab11A (216 aa).

GTP-binding positions include 19–27 (GDSGVGKSN), 38–44 (CLESKST), 67–71 (DTAGQ), 125–128 (NKSD), and 155–157 (SAL). The Effector region signature appears at 41 to 49 (SKSTIGVEF). 2 S-geranylgeranyl cysteine lipidation sites follow: Cys-213 and Cys-214.

The protein belongs to the small GTPase superfamily. Rab family.

It localises to the cell membrane. In Nicotiana tabacum (Common tobacco), this protein is Ras-related protein Rab11A (RAB11A).